The primary structure comprises 174 residues: MIFWKNFFQNSNINASSEKNFKKLIVLDKTCDKIEFKDIYLSSNKNINLYELEQLCDSVGWVKRPLKKVKIALKNSSIIISLIQKKDANSKLVGFARATSDNGFNATIWDVVIHPDFQGLGLGKVVIHQLIQQLRQAEISTITLFAEPDVVSFYKKLGFIKDPDGVKGMFWYPR.

The N-acetyltransferase domain occupies 42–174 (SSNKNINLYE…GVKGMFWYPR (133 aa)).

This sequence belongs to the acetyltransferase family. Ycf52 subfamily.

It localises to the plastid. The protein resides in the chloroplast. This is an uncharacterized protein from Pyropia yezoensis (Susabi-nori).